The chain runs to 115 residues: Iron-sulfur cluster insertion protein ErpA (115 aa).

Iron-sulfur cluster is bound by residues Cys-43, Cys-107, and Cys-109.

Belongs to the HesB/IscA family. Homodimer. The cofactor is iron-sulfur cluster.

Functionally, required for insertion of 4Fe-4S clusters for at least IspG. This Buchnera aphidicola subsp. Baizongia pistaciae (strain Bp) protein is Iron-sulfur cluster insertion protein ErpA.